The following is a 532-amino-acid chain: Phosphoenolpyruvate carboxykinase (ATP) (532 aa).

Residues arginine 60, tyrosine 195, and lysine 201 each contribute to the substrate site. Residues lysine 201, histidine 221, and 237–245 (GLSGTGKTT) contribute to the ATP site. Residues lysine 201 and histidine 221 each coordinate Mn(2+). Aspartate 258 provides a ligand contact to Mn(2+). Residues glutamate 287, arginine 323, and threonine 448 each contribute to the ATP site. Residue arginine 323 coordinates substrate.

It belongs to the phosphoenolpyruvate carboxykinase (ATP) family. The cofactor is Mn(2+).

It localises to the cytoplasm. The catalysed reaction is oxaloacetate + ATP = phosphoenolpyruvate + ADP + CO2. The protein operates within carbohydrate biosynthesis; gluconeogenesis. In terms of biological role, involved in the gluconeogenesis. Catalyzes the conversion of oxaloacetate (OAA) to phosphoenolpyruvate (PEP) through direct phosphoryl transfer between the nucleoside triphosphate and OAA. The protein is Phosphoenolpyruvate carboxykinase (ATP) of Christiangramia forsetii (strain DSM 17595 / CGMCC 1.15422 / KT0803) (Gramella forsetii).